The following is a 62-amino-acid chain: Large ribosomal subunit protein uL30 (62 aa).

This sequence belongs to the universal ribosomal protein uL30 family. In terms of assembly, part of the 50S ribosomal subunit.

The protein is Large ribosomal subunit protein uL30 of Hydrogenovibrio crunogenus (strain DSM 25203 / XCL-2) (Thiomicrospira crunogena).